Consider the following 455-residue polypeptide: Phosphomethylpyrimidine synthase (455 aa).

Substrate is bound by residues Asn-80, Met-109, Tyr-139, His-175, 195–197 (SRG), 236–239 (DALR), and Glu-275. His-279 provides a ligand contact to Zn(2+). Tyr-302 serves as a coordination point for substrate. His-343 contacts Zn(2+). 3 residues coordinate [4Fe-4S] cluster: Cys-423, Cys-426, and Cys-431.

Belongs to the ThiC family. Requires [4Fe-4S] cluster as cofactor.

It catalyses the reaction 5-amino-1-(5-phospho-beta-D-ribosyl)imidazole + S-adenosyl-L-methionine = 4-amino-2-methyl-5-(phosphooxymethyl)pyrimidine + CO + 5'-deoxyadenosine + formate + L-methionine + 3 H(+). It functions in the pathway cofactor biosynthesis; thiamine diphosphate biosynthesis. Functionally, catalyzes the synthesis of the hydroxymethylpyrimidine phosphate (HMP-P) moiety of thiamine from aminoimidazole ribotide (AIR) in a radical S-adenosyl-L-methionine (SAM)-dependent reaction. This chain is Phosphomethylpyrimidine synthase, found in Synechococcus sp. (strain JA-3-3Ab) (Cyanobacteria bacterium Yellowstone A-Prime).